The chain runs to 210 residues: MPSRSKSSQRWLKEHFADPFVKKAQAEGMRSRAAYKLEELLQRDRLLKPGMVVVDLGAAPGGWSQQVRKSMGASGRVVALDILEMPPLAGVEFLHGDFREQAVLSEFEAMLGDVPVDLVLSDMAPNKSGMDAVDQPRMMHLAELAMEFADTHLKVGGAFLIKLFQGVGSDDYIRELRRRYEKVTIRKPAASRKRSAEVYVLGQGKRAQIK.

Residues glycine 61, tryptophan 63, aspartate 81, aspartate 97, and aspartate 122 each coordinate S-adenosyl-L-methionine. The Proton acceptor role is filled by lysine 162.

It belongs to the class I-like SAM-binding methyltransferase superfamily. RNA methyltransferase RlmE family.

The protein resides in the cytoplasm. The enzyme catalyses uridine(2552) in 23S rRNA + S-adenosyl-L-methionine = 2'-O-methyluridine(2552) in 23S rRNA + S-adenosyl-L-homocysteine + H(+). Specifically methylates the uridine in position 2552 of 23S rRNA at the 2'-O position of the ribose in the fully assembled 50S ribosomal subunit. This is Ribosomal RNA large subunit methyltransferase E from Xanthomonas campestris pv. campestris (strain 8004).